The sequence spans 30 residues: Arsenate respiratory reductase iron-sulfur subunit ArrB (30 aa).

Cysteine 12, cysteine 15, cysteine 18, and cysteine 22 together coordinate [4Fe-4S] cluster.

As to quaternary structure, heterodimer composed of one large subunit (ArrA) and one small subunit (ArrB). It depends on [4Fe-4S] cluster as a cofactor.

Its subcellular location is the periplasm. Functionally, component of the arsenate respiratory reductase (Arr) complex, which catalyzes the reduction of arsenate (As(V)) to arsenite (As(III)). ArrB is probably the electron transfer subunit. The protein is Arsenate respiratory reductase iron-sulfur subunit ArrB of Chrysiogenes arsenatis.